A 378-amino-acid chain; its full sequence is Chaperone protein DnaJ (378 aa).

Residues 3–67 (DYYDLLGVSK…QTRGRYDQFG (65 aa)) enclose the J domain. Residues 133–215 (GQEREIKIPH…CAGQGVRQVR (83 aa)) form a CR-type zinc finger. 8 residues coordinate Zn(2+): C146, C149, C163, C166, C189, C192, C203, and C206. 4 CXXCXGXG motif repeats span residues 146–153 (CDTCNGTG), 163–170 (CSTCGGVG), 189–196 (CPSCEGTG), and 203–210 (CPACAGQG).

It belongs to the DnaJ family. Homodimer. Zn(2+) serves as cofactor.

The protein localises to the cytoplasm. In terms of biological role, participates actively in the response to hyperosmotic and heat shock by preventing the aggregation of stress-denatured proteins and by disaggregating proteins, also in an autonomous, DnaK-independent fashion. Unfolded proteins bind initially to DnaJ; upon interaction with the DnaJ-bound protein, DnaK hydrolyzes its bound ATP, resulting in the formation of a stable complex. GrpE releases ADP from DnaK; ATP binding to DnaK triggers the release of the substrate protein, thus completing the reaction cycle. Several rounds of ATP-dependent interactions between DnaJ, DnaK and GrpE are required for fully efficient folding. Also involved, together with DnaK and GrpE, in the DNA replication of plasmids through activation of initiation proteins. This chain is Chaperone protein DnaJ, found in Prochlorococcus marinus (strain MIT 9313).